Reading from the N-terminus, the 507-residue chain is tRNA (guanine(6)-N(2))-methyltransferase THUMP3 (507 aa).

Positions 165 to 285 constitute a THUMP domain; that stretch reads KIDQRNVKKE…DNEVIVGIAL (121 aa).

The protein belongs to the methyltransferase superfamily. As to quaternary structure, part of the heterodimeric THUMPD3-TRM112 methyltransferase complex; this complex forms an active tRNA methyltransferase, where TRMT112 acts as an activator of the catalytic subunit THUMPD3.

It is found in the cytoplasm. The enzyme catalyses guanosine(6) in tRNA + S-adenosyl-L-methionine = N(2)-methylguanosine(6) in tRNA + S-adenosyl-L-homocysteine + H(+). It catalyses the reaction guanosine(7) in tRNA + S-adenosyl-L-methionine = N(2)-methylguanosine(7) in tRNA + S-adenosyl-L-homocysteine + H(+). Functionally, catalytic subunit of the THUMPD3-TRM112 methyltransferase complex, that specifically mediates the S-adenosyl-L-methionine-dependent N(2)-methylation of guanosine nucleotide at position 6 (m2G6) in tRNAs. This is one of the major tRNA (guanine-N(2))-methyltransferases. Also catalyzes the S-adenosyl-L-methionine-dependent N(2)-methylation of guanosine nucleotide at position 7 of tRNA(Trp). In Homo sapiens (Human), this protein is tRNA (guanine(6)-N(2))-methyltransferase THUMP3.